The sequence spans 330 residues: MKKIAVDAMGGDYAPQAIVEGVNQALSDFSDIEVQLYGDEAKIKPYLTATERVSIIHTDEKIDSDDEPTRAIRNKKNASMVLAAKAVKDGEADAVLSAGNTGALLAAGFFIVGRIKNIDRPGLMSTLPTVDGKGFDMLDLGANAENTAQHLHQYAVLGSFYAKNVRGIAQPRVGLLNNGTESSKGDPLRKETYELLAADESLNFIGNVEGRDLMNGVADVVVADGFTGNAVLKSIEGTAMGIMGLLKTAITGGGLRAKLGALLLKDSLSGLKKQLNYSDVGGAVLFGVKAPVVKTHGSSDAKAVYSTIRQIRTMLETDVVAQTAREFSGE.

The protein belongs to the PlsX family. As to quaternary structure, homodimer. Probably interacts with PlsY.

Its subcellular location is the cytoplasm. It carries out the reaction a fatty acyl-[ACP] + phosphate = an acyl phosphate + holo-[ACP]. It participates in lipid metabolism; phospholipid metabolism. In terms of biological role, catalyzes the reversible formation of acyl-phosphate (acyl-PO(4)) from acyl-[acyl-carrier-protein] (acyl-ACP). This enzyme utilizes acyl-ACP as fatty acyl donor, but not acyl-CoA. The polypeptide is Phosphate acyltransferase (Streptococcus pneumoniae (strain ATCC 700669 / Spain 23F-1)).